The primary structure comprises 379 residues: UDP-4-amino-4-deoxy-L-arabinose--oxoglutarate aminotransferase (379 aa).

Position 182 is an N6-(pyridoxal phosphate)lysine (Lys182).

It belongs to the DegT/DnrJ/EryC1 family. ArnB subfamily. In terms of assembly, homodimer. It depends on pyridoxal 5'-phosphate as a cofactor.

It catalyses the reaction UDP-4-amino-4-deoxy-beta-L-arabinose + 2-oxoglutarate = UDP-beta-L-threo-pentopyranos-4-ulose + L-glutamate. Its pathway is nucleotide-sugar biosynthesis; UDP-4-deoxy-4-formamido-beta-L-arabinose biosynthesis; UDP-4-deoxy-4-formamido-beta-L-arabinose from UDP-alpha-D-glucuronate: step 2/3. It participates in bacterial outer membrane biogenesis; lipopolysaccharide biosynthesis. In terms of biological role, catalyzes the conversion of UDP-4-keto-arabinose (UDP-Ara4O) to UDP-4-amino-4-deoxy-L-arabinose (UDP-L-Ara4N). The modified arabinose is attached to lipid A and is required for resistance to polymyxin and cationic antimicrobial peptides. In Escherichia coli O7:K1 (strain IAI39 / ExPEC), this protein is UDP-4-amino-4-deoxy-L-arabinose--oxoglutarate aminotransferase.